Reading from the N-terminus, the 75-residue chain is Defensin-like protein 59 (75 aa).

The N-terminal stretch at M1–S19 is a signal peptide. 4 disulfide bridges follow: C39/C73, C43/C66, C52/C71, and C56/C72.

It belongs to the DEFL family.

The protein localises to the secreted. The sequence is that of Defensin-like protein 59 from Arabidopsis thaliana (Mouse-ear cress).